A 50-amino-acid polypeptide reads, in one-letter code: Large ribosomal subunit protein bL33B (50 aa).

Belongs to the bacterial ribosomal protein bL33 family.

The chain is Large ribosomal subunit protein bL33B (rpmG2) from Enterococcus faecalis (strain ATCC 700802 / V583).